Consider the following 255-residue polypeptide: 3-deoxy-manno-octulosonate cytidylyltransferase (255 aa).

The protein belongs to the KdsB family.

It is found in the cytoplasm. It catalyses the reaction 3-deoxy-alpha-D-manno-oct-2-ulosonate + CTP = CMP-3-deoxy-beta-D-manno-octulosonate + diphosphate. It functions in the pathway nucleotide-sugar biosynthesis; CMP-3-deoxy-D-manno-octulosonate biosynthesis; CMP-3-deoxy-D-manno-octulosonate from 3-deoxy-D-manno-octulosonate and CTP: step 1/1. The protein operates within bacterial outer membrane biogenesis; lipopolysaccharide biosynthesis. In terms of biological role, activates KDO (a required 8-carbon sugar) for incorporation into bacterial lipopolysaccharide in Gram-negative bacteria. The polypeptide is 3-deoxy-manno-octulosonate cytidylyltransferase (Pelobacter propionicus (strain DSM 2379 / NBRC 103807 / OttBd1)).